The chain runs to 320 residues: MNCFLFTLFFVAAPLATASYGSSSGGGGGGSSYLSSASSNGLDELVQAAAGGAQQAGGTITPANAEIPVSPAEVARLNQVQAQLQALNSNPVYRNLKNSDAIAESLAESSLASKIRQGNINIVAPNVIDQGVYRSLLVPSGQNNHQVIATQPLPPIIVNQPALPPTQIGGGPAAVVKAAPVIYKIKPSVIYQQEVINKVPTPLSLNPVYVKVYKPGKKIDAPLVPGVQQNYQAPSYGGSSYSAPAASYEPAPAPSYSAAPAQSYNAAPAPSYSAAPAASYGAAPSASYDAAPAASYGAESSYGSPQSSSSYGSAPPASGY.

Positions M1–A18 are cleaved as a signal peptide. 5 repeat units span residues A178–V181, A258–A261, A266–A269, A274–A277, and A290. Residues A259–Y320 are disordered.

This sequence belongs to the chorion protein S36 family.

The protein resides in the secreted. Its function is as follows. Chorion membrane (egg shell) protein; plays a role in protecting the egg from the environment. The chain is Chorion protein S36 (Cp36) from Ceratitis capitata (Mediterranean fruit fly).